The following is a 312-amino-acid chain: Olfactory receptor 2L2 (312 aa).

Over 1–24 (MENYNQTSTDFILLGLFPQSRIGL) the chain is Extracellular. N5 is a glycosylation site (N-linked (GlcNAc...) asparagine). Residues 25–48 (FVFTLIFLIFLMALIGNLSMILLI) form a helical membrane-spanning segment. Residues 49–56 (FLDIHLHT) are Cytoplasmic-facing. The helical transmembrane segment at 57-78 (PMYFLLSQLSLIDLNYISTIVP) threads the bilayer. The Extracellular portion of the chain corresponds to 79–99 (KMVYDFLYGNKSISFTGCGIQ). An N-linked (GlcNAc...) asparagine glycan is attached at N88. Residues C96 and C188 are joined by a disulfide bond. Residues 100–119 (SFFFLTLAVAEGLLLTSMAY) traverse the membrane as a helical segment. At 120–138 (DRYVAICFPLHYPIRISKR) the chain is on the cytoplasmic side. The helical transmembrane segment at 139 to 157 (VCVMMITGSWMISSINSCA) threads the bilayer. Topologically, residues 158 to 194 (HTVYALCIPYCKSRAINHFFCDVPAMLTLACTDTWVY) are extracellular. A helical transmembrane segment spans residues 195 to 218 (ESTVFLSSTIFLVLPFTGIACSYG). Over 219 to 235 (RVLLAVYRMHSAEGRKK) the chain is Cytoplasmic. The helical transmembrane segment at 236–258 (AYSTCSTHLTVVSFYYAPFAYTY) threads the bilayer. At 259–271 (VRPRSLRSPTEDK) the chain is on the extracellular side. Residues 272–291 (ILAVFYTILTPMLNPIIYSL) traverse the membrane as a helical segment. Over 292–312 (RNKEVMGALTQVIQKIFSVKM) the chain is Cytoplasmic.

The protein belongs to the G-protein coupled receptor 1 family.

Its subcellular location is the cell membrane. In terms of biological role, odorant receptor. The chain is Olfactory receptor 2L2 (OR2L2) from Homo sapiens (Human).